Reading from the N-terminus, the 504-residue chain is UDP-N-acetylglucosamine--peptide N-acetylglucosaminyltransferase GtfA subunit (504 aa).

Position 16 to 19 (16 to 19 (GVEY)) interacts with UDP. Histidine 243 contacts N-acetyl-D-glucosamine. 385–386 (HK) contacts UDP. Residue 405–408 (EGFG) coordinates N-acetyl-D-glucosamine.

It belongs to the glycosyltransferase group 1 family. Glycosyltransferase 4 subfamily. As to quaternary structure, interacts with stabilizing protein GtfB (Gtf1), probably via the N-terminus of this protein; probably forms a heterotetramer with 2 subunits each of GtfA and GtfB. Part of the accessory SecA2/SecY2 protein translocation apparatus.

It localises to the cytoplasm. Its subcellular location is the cell membrane. It catalyses the reaction L-seryl-[protein] + UDP-N-acetyl-alpha-D-glucosamine = 3-O-[N-acetyl-alpha-D-glucosaminyl]-L-seryl-[protein] + UDP + H(+). Its pathway is protein modification; protein glycosylation. Functionally, required for polymorphic O-glycosylation of serine-rich repeat protein Fap1. Catalyzes the first step in glycosylation by transferring N-acetylglucosamine from UDP-GlcNAc to serine residues in Fap1. Part of the accessory SecA2/SecY2 system specifically required to export Fap1, a serine-rich fimbrial adhesin encoded upstream in the same operon. The GtfA-GtfB (Gtf1-Gtf2 in this bacteria) complex adds GlcNAc from UDP-GlcNAc to Fap1, attaching the first sugar residue. Cannot use not UDP-Glc as substrate. This subunit has very low glycosyltransferase activity; the GtfB stabilizing protein enhances membrane association, protease resistance and glycosyltransferase activity. This chain is UDP-N-acetylglucosamine--peptide N-acetylglucosaminyltransferase GtfA subunit, found in Streptococcus parasanguinis.